The sequence spans 784 residues: Protein translocase subunit SecA 2 (784 aa).

Residues Q94, 112–116 (GEGKT), and D501 each bind ATP.

This sequence belongs to the SecA family. As to quaternary structure, monomer and homodimer. Part of the essential Sec protein translocation apparatus which comprises SecA, SecYEG and auxiliary proteins SecDF. Other proteins may also be involved.

The protein localises to the cell membrane. It is found in the cytoplasm. It catalyses the reaction ATP + H2O + cellular proteinSide 1 = ADP + phosphate + cellular proteinSide 2.. Part of the Sec protein translocase complex. Interacts with the SecYEG preprotein conducting channel. Has a central role in coupling the hydrolysis of ATP to the transfer of proteins into and across the cell membrane, serving as an ATP-driven molecular motor driving the stepwise translocation of polypeptide chains across the membrane. This Mycolicibacterium smegmatis (strain ATCC 700084 / mc(2)155) (Mycobacterium smegmatis) protein is Protein translocase subunit SecA 2.